The primary structure comprises 192 residues: SPbeta prophage-derived uncharacterized protein YokK (192 aa).

The polypeptide is SPbeta prophage-derived uncharacterized protein YokK (yokK) (Bacillus subtilis (strain 168)).